Here is an 89-residue protein sequence, read N- to C-terminus: Small ribosomal subunit protein uS15 (89 aa).

This sequence belongs to the universal ribosomal protein uS15 family. In terms of assembly, part of the 30S ribosomal subunit. Forms a bridge to the 50S subunit in the 70S ribosome, contacting the 23S rRNA.

In terms of biological role, one of the primary rRNA binding proteins, it binds directly to 16S rRNA where it helps nucleate assembly of the platform of the 30S subunit by binding and bridging several RNA helices of the 16S rRNA. Forms an intersubunit bridge (bridge B4) with the 23S rRNA of the 50S subunit in the ribosome. The chain is Small ribosomal subunit protein uS15 from Corynebacterium efficiens (strain DSM 44549 / YS-314 / AJ 12310 / JCM 11189 / NBRC 100395).